The following is a 150-amino-acid chain: Large ribosomal subunit protein bL9 (150 aa).

The protein belongs to the bacterial ribosomal protein bL9 family.

Binds to the 23S rRNA. In Pediococcus pentosaceus (strain ATCC 25745 / CCUG 21536 / LMG 10740 / 183-1w), this protein is Large ribosomal subunit protein bL9.